An 86-amino-acid chain; its full sequence is Protein IDA-LIKE 1 (86 aa).

Positions 1 to 27 (MNLSHKTMFMTLYIVFLLIFGSYNATA) are cleaved as a signal peptide.

In terms of tissue distribution, expressed in roots.

It is found in the secreted. Its subcellular location is the extracellular space. In terms of biological role, involved in an ethylene-independent separation step of floral abscission. May act with RLK5 and HSL2 as ligand-receptor pairs. The polypeptide is Protein IDA-LIKE 1 (IDL1) (Arabidopsis thaliana (Mouse-ear cress)).